A 543-amino-acid polypeptide reads, in one-letter code: MFSWLKKGGARGQRSEAIRTVTSSLKELYRTKLLPLEEHYRFGSFHSPALEDADFDGKPMVLVAGQYSTGKTSFIQYLLEQEVPGSRVGPEPTTDCFVAVMHGETEGTVPGNALVVDPEKPFRKLNPFGNTFLNRFMCAQLPNQVLESISIIDTPGILSGAKQRVSRGYDFPAVLRWFAERVDLIILLFDAHKLEISDEFSEAIGALRGHEDKIRVVLNKADMVETQQLMRVYGALMWALGKVVGTPEVLRVYIGSFWSQPLLVPDNRRLFELEEQDLFRDIQGLPRHAALRKLNDLVKRARLVRVHAYIISYLKKEMPSVFGKENKKKQLIFKLPVIFAKIQLEHHISPGDFPDCQKMQELLMAHDFTKFHSLKPKLLEALDEMLTHDIAKLMPLLRQEELESVEAGVQGGAFEGTRMGPFVERGPDEAIEDGEEGSEDDAEWVVTKDKSKYDEIFYNLAPADGKLSGSKAKTWMVGTKLPNSVLGRIWKLSDVDRDGMLDDEEFALASHLIEAKLEGHGLPTNLPRRLVPPSKRRQKGSAE.

Residues serine 3 and serine 44 each carry the phosphoserine modification. The region spanning phenylalanine 55–proline 286 is the Dynamin-type G domain. The segment at glycine 65 to threonine 72 is G1 motif. Glycine 65–threonine 72 contributes to the ATP binding site. Residues glutamate 91 to proline 92 form a G2 motif region. The G3 motif stretch occupies residues aspartate 153 to glycine 156. The interval asparagine 219–aspartate 222 is G4 motif. Residue lysine 220 participates in ATP binding. Position 243 (valine 243) is a region of interest, G5 motif. An ATP-binding site is contributed by tryptophan 258. The mediates membrane-binding stretch occupies residues serine 320–alanine 340. 5 positions are modified to phosphoserine: serine 438, serine 468, serine 470, serine 484, and serine 493. The 89-residue stretch at aspartate 449 to arginine 537 folds into the EH domain. The region spanning leucine 481–lysine 516 is the EF-hand domain. Residues aspartate 494, aspartate 496, aspartate 498, methionine 500, and glutamate 505 each contribute to the Ca(2+) site. The disordered stretch occupies residues glycine 521–glutamate 543. Residues serine 534–glutamate 543 are compositionally biased toward basic residues.

This sequence belongs to the TRAFAC class dynamin-like GTPase superfamily. Dynamin/Fzo/YdjA family. EHD subfamily. As to quaternary structure, homodimer and homooligomer. Interacts with EHD1. May also interact with EHD3 and EHD4. Interacts with MYOF. Interacts with EHBP1. Interacts with FER1L5 (via second C2 domain). Interacts with CAV1 in a cholesterol-dependent manner. Interacts (via EH domain) with PACSIN2 (via NPF motifs); this interaction probably stabilizes the caveolae.

The protein localises to the cell membrane. It is found in the membrane. It localises to the caveola. The protein resides in the endosome membrane. Its subcellular location is the cytoplasm. The protein localises to the cytosol. With respect to regulation, the very low intrinsic ATPase activity is increased upon interaction with liposomes. In terms of biological role, ATP- and membrane-binding protein that controls membrane reorganization/tubulation upon ATP hydrolysis. Plays a role in membrane trafficking between the plasma membrane and endosomes. Important for the internalization of GLUT4. Required for fusion of myoblasts to skeletal muscle myotubes. Required for normal translocation of FER1L5 to the plasma membrane. Regulates the equilibrium between cell surface-associated and cell surface-dissociated caveolae by constraining caveolae at the cell membrane. This Rattus norvegicus (Rat) protein is EH domain-containing protein 2.